A 319-amino-acid polypeptide reads, in one-letter code: ATP-dependent 6-phosphofructokinase (319 aa).

Residues Gly-10, 71–72 (RS), and 101–104 (GDGS) each bind ATP. Asp-102 provides a ligand contact to Mg(2+). Position 125–127 (125–127 (TID)) interacts with substrate. Asp-127 acts as the Proton acceptor in catalysis. Arg-154 is an ADP binding site. Substrate is bound by residues Arg-162 and 169–171 (MGR). 185–187 (GAE) lines the ADP pocket. Substrate contacts are provided by residues Glu-223, Arg-244, and 250–253 (HVQR).

This sequence belongs to the phosphofructokinase type A (PFKA) family. ATP-dependent PFK group I subfamily. Prokaryotic clade 'B1' sub-subfamily. In terms of assembly, homotetramer. It depends on Mg(2+) as a cofactor.

The protein localises to the cytoplasm. The catalysed reaction is beta-D-fructose 6-phosphate + ATP = beta-D-fructose 1,6-bisphosphate + ADP + H(+). It functions in the pathway carbohydrate degradation; glycolysis; D-glyceraldehyde 3-phosphate and glycerone phosphate from D-glucose: step 3/4. Allosterically activated by ADP and other diphosphonucleosides, and allosterically inhibited by phosphoenolpyruvate. Its function is as follows. Catalyzes the phosphorylation of D-fructose 6-phosphate to fructose 1,6-bisphosphate by ATP, the first committing step of glycolysis. The sequence is that of ATP-dependent 6-phosphofructokinase from Wolinella succinogenes (strain ATCC 29543 / DSM 1740 / CCUG 13145 / JCM 31913 / LMG 7466 / NCTC 11488 / FDC 602W) (Vibrio succinogenes).